The following is a 541-amino-acid chain: Membrane protein insertase YidC (541 aa).

Helical transmembrane passes span 7-27 (LLFMALLFISFLIYQQWQVDY), 345-365 (LVQNWGLAIIGVTLVVKAILY), 415-435 (LGGCLPILLQMPIFIALYWTF), 453-473 (LSAQDPYFILPILMGASMFLL), and 492-512 (FMPLIFMVFFLFFPAGLVLYW).

This sequence belongs to the OXA1/ALB3/YidC family. Type 1 subfamily. Interacts with the Sec translocase complex via SecD. Specifically interacts with transmembrane segments of nascent integral membrane proteins during membrane integration.

The protein resides in the cell inner membrane. Required for the insertion and/or proper folding and/or complex formation of integral membrane proteins into the membrane. Involved in integration of membrane proteins that insert both dependently and independently of the Sec translocase complex, as well as at least some lipoproteins. Aids folding of multispanning membrane proteins. This chain is Membrane protein insertase YidC, found in Histophilus somni (strain 129Pt) (Haemophilus somnus).